The chain runs to 87 residues: Large ribosomal subunit protein eL20 (87 aa).

The protein belongs to the eukaryotic ribosomal protein eL20 family. Part of the 50S ribosomal subunit. Binds 23S rRNA.

This Staphylothermus marinus (strain ATCC 43588 / DSM 3639 / JCM 9404 / F1) protein is Large ribosomal subunit protein eL20.